A 325-amino-acid chain; its full sequence is tRNA N6-adenosine threonylcarbamoyltransferase (325 aa).

H111 and H115 together coordinate Fe cation. Substrate is bound by residues 134–138 (LISGG), D167, G180, and N277. Residue D305 coordinates Fe cation.

It belongs to the KAE1 / TsaD family. Fe(2+) serves as cofactor.

It is found in the cytoplasm. The protein resides in the secreted. The catalysed reaction is L-threonylcarbamoyladenylate + adenosine(37) in tRNA = N(6)-L-threonylcarbamoyladenosine(37) in tRNA + AMP + H(+). Required for the formation of a threonylcarbamoyl group on adenosine at position 37 (t(6)A37) in tRNAs that read codons beginning with adenine. Is involved in the transfer of the threonylcarbamoyl moiety of threonylcarbamoyl-AMP (TC-AMP) to the N6 group of A37, together with TsaE and TsaB. TsaD likely plays a direct catalytic role in this reaction. The sequence is that of tRNA N6-adenosine threonylcarbamoyltransferase from Mannheimia haemolytica (Pasteurella haemolytica).